The sequence spans 196 residues: Imidazoleglycerol-phosphate dehydratase (196 aa).

The protein belongs to the imidazoleglycerol-phosphate dehydratase family.

Its subcellular location is the cytoplasm. It carries out the reaction D-erythro-1-(imidazol-4-yl)glycerol 3-phosphate = 3-(imidazol-4-yl)-2-oxopropyl phosphate + H2O. The protein operates within amino-acid biosynthesis; L-histidine biosynthesis; L-histidine from 5-phospho-alpha-D-ribose 1-diphosphate: step 6/9. This chain is Imidazoleglycerol-phosphate dehydratase, found in Nitratidesulfovibrio vulgaris (strain DSM 19637 / Miyazaki F) (Desulfovibrio vulgaris).